A 324-amino-acid chain; its full sequence is UDP-N-acetylenolpyruvoylglucosamine reductase (324 aa).

Residues 36–203 form the FAD-binding PCMH-type domain; that stretch reads FRAGGLAELM…TSVLFEGYPE (168 aa). Residue R183 is part of the active site. S232 acts as the Proton donor in catalysis. E302 is an active-site residue.

Belongs to the MurB family. The cofactor is FAD.

Its subcellular location is the cytoplasm. The catalysed reaction is UDP-N-acetyl-alpha-D-muramate + NADP(+) = UDP-N-acetyl-3-O-(1-carboxyvinyl)-alpha-D-glucosamine + NADPH + H(+). The protein operates within cell wall biogenesis; peptidoglycan biosynthesis. Its function is as follows. Cell wall formation. This Rhizobium etli (strain CIAT 652) protein is UDP-N-acetylenolpyruvoylglucosamine reductase.